A 213-amino-acid polypeptide reads, in one-letter code: Receptor-binding cancer antigen expressed on SiSo cells (213 aa).

The Extracellular portion of the chain corresponds to 1-6; the sequence is MAITQF. Residues 7–27 traverse the membrane as a helical; Signal-anchor for type III membrane protein segment; the sequence is RLFKVCTCLATVLSFLKRLIC. Topologically, residues 28-213 are cytoplasmic; it reads RSGRGRKLSG…EQNKMGVKLS (186 aa). A Phosphoserine modification is found at S36. Residue T41 is modified to Phosphothreonine. A Phosphotyrosine modification is found at Y94. The stretch at 168 to 209 forms a coiled coil; it reads QAEEVLRQQKIADREKRAAEQQRKKMEKEAQRLLKKEQNKMG. Basic and acidic residues predominate over residues 179–206; it reads ADREKRAAEQQRKKMEKEAQRLLKKEQN. Residues 179–213 are disordered; that stretch reads ADREKRAAEQQRKKMEKEAQRLLKKEQNKMGVKLS.

As to quaternary structure, homodimer.

It is found in the golgi apparatus membrane. In terms of biological role, may participate in suppression of cell proliferation and induces apoptotic cell death through activation of interleukin-1-beta converting enzyme (ICE)-like proteases. This is Receptor-binding cancer antigen expressed on SiSo cells (Ebag9) from Rattus norvegicus (Rat).